The following is a 77-amino-acid chain: Small ribosomal subunit protein bS21 (77 aa).

Belongs to the bacterial ribosomal protein bS21 family.

The polypeptide is Small ribosomal subunit protein bS21 (Bartonella tribocorum (strain CIP 105476 / IBS 506)).